Here is a 1196-residue protein sequence, read N- to C-terminus: Major DNA-binding protein (1196 aa).

A zinc finger lies at 499–512 (CNLCTFDTRHACVH). 2 short sequence motifs (required for filament formation) span residues 843–844 (FW) and 1142–1144 (FNF). The tract at residues 1158–1196 (GGPGAPGPAFAGRKRAFHGDDPFGEGPPDKKGDLTLDML) is disordered. The tract at residues 1170 to 1196 (RKRAFHGDDPFGEGPPDKKGDLTLDML) is required for nuclear localization. Residues 1174–1196 (FHGDDPFGEGPPDKKGDLTLDML) show a composition bias toward basic and acidic residues.

It belongs to the herpesviridae major DNA-binding protein family. In terms of assembly, homooligomers. Forms double-helical filaments necessary for the formation of replication compartments within the host nucleus. Interacts with the origin-binding protein. Interacts with the helicase primase complex; this interaction stimulates primer synthesis activity of the helicase-primase complex. Interacts with the DNA polymerase. Interacts with the alkaline exonuclease; this interaction increases its nuclease processivity.

Its subcellular location is the host nucleus. In terms of biological role, plays several crucial roles in viral infection. Participates in the opening of the viral DNA origin to initiate replication by interacting with the origin-binding protein. May disrupt loops, hairpins and other secondary structures present on ssDNA to reduce and eliminate pausing of viral DNA polymerase at specific sites during elongation. Promotes viral DNA recombination by performing strand-transfer, characterized by the ability to transfer a DNA strand from a linear duplex to a complementary single-stranded DNA circle. Can also catalyze the renaturation of complementary single strands. Additionally, reorganizes the host cell nucleus, leading to the formation of prereplicative sites and replication compartments. This process is driven by the protein which can form double-helical filaments in the absence of DNA. This chain is Major DNA-binding protein, found in Homo sapiens (Human).